We begin with the raw amino-acid sequence, 242 residues long: Terpene cyclase cle7 (242 aa).

7 helical membrane passes run 20–40, 50–69, 79–101, 117–137, 143–163, 172–192, and 207–227; these read LLLT…ITTI, GVSL…FAIL, VILR…FARS, LFVL…SVLL, FYWS…GILV, SYGM…SLFL, and ILMR…GVCF.

Belongs to the paxB family.

The protein resides in the membrane. It functions in the pathway secondary metabolite biosynthesis; terpenoid biosynthesis. Its function is as follows. Non-reducing polyketide synthase; part of the cluster A that mediates the biosynthesis of chevalone E and its oxidized derivatives that possess a unique five-membered lactone ring and can synergistically enhance the cytotoxicity of doxorubicin (DOX) in breast cancer cells. Within the pathway, cle7 takes part to the biosynthesis of the molecular scaffold by catalyzing the cyclization of the prenyl group initiated by protonation and ring-opening of the epoxide to produce the chevalone E intermediate. The molecular scaffold is commonly biosynthesized by a series of enzymes including the non-reducing polyketide synthase (NR-PKS) cle1 that produces the alpha-pyrone triacetic acid lactone (TAL); The membrane-bound prenyltransferase cle5 that accepts TAL as its substrate to perform a C-3 geranylgeranylation reaction, in which the pathway-dedicated GGPS cle6 is required to provide GGPP, the other substrate of cle5; the FAD-dependent monooxygenase Cle3 that forms an (S)-epoxide ring at the terminal olefin of the geranylgeranyl group; and the terpene cyclase Cle7 that catalyzes the cyclization of the prenyl group that yields the pentacyclic pathway intermediate chevalone E. Chevalone E can derivatize into seven new oxidized analogs by the cytochrome P450 monooxygenases cle2 (acting at C-20) and cle4 (acting at C-11 and C-12). The sequence is that of Terpene cyclase cle7 from Aspergillus versicolor.